The following is a 119-amino-acid chain: Large ribosomal subunit protein bL19 (119 aa).

The protein belongs to the bacterial ribosomal protein bL19 family.

In terms of biological role, this protein is located at the 30S-50S ribosomal subunit interface and may play a role in the structure and function of the aminoacyl-tRNA binding site. This Psychromonas ingrahamii (strain DSM 17664 / CCUG 51855 / 37) protein is Large ribosomal subunit protein bL19.